The sequence spans 1072 residues: DNA-directed RNA polymerase subunit beta (1072 aa).

This sequence belongs to the RNA polymerase beta chain family. In terms of assembly, in plastids the minimal PEP RNA polymerase catalytic core is composed of four subunits: alpha, beta, beta', and beta''. When a (nuclear-encoded) sigma factor is associated with the core the holoenzyme is formed, which can initiate transcription.

It is found in the plastid. It localises to the chloroplast. It catalyses the reaction RNA(n) + a ribonucleoside 5'-triphosphate = RNA(n+1) + diphosphate. DNA-dependent RNA polymerase catalyzes the transcription of DNA into RNA using the four ribonucleoside triphosphates as substrates. The polypeptide is DNA-directed RNA polymerase subunit beta (Lobularia maritima (Sweet alyssum)).